The following is a 190-amino-acid chain: MLSEFFNNITSFFVNIFSLFEGKRNIRILMIGLDGAGKSTLLYKLKFGDVIRTIPTIGFNVEIIEYKNLSMNVWDIGGQNNIRALWRQYDQRTDVFIFVVDSTDRERFDEVKQEIKNIIEQNKNESSNASLLIFANKQDMLNPITPAELVNSLDLNSLTNKKWHVQPCSAVRGDGIYEGFDWIVSNSSGK.

Residues 34–40 (DGAGKST), 75–79 (DIGGQ), and 136–139 (NKQD) contribute to the GTP site.

It belongs to the small GTPase superfamily. Arf family.

The protein resides in the golgi apparatus. In terms of biological role, GTP-binding protein that may be involved in protein trafficking. May modulate vesicle budding and uncoating within the Golgi apparatus. This chain is ADP-ribosylation factor F (arrF), found in Dictyostelium discoideum (Social amoeba).